The chain runs to 755 residues: Serine/threonine-protein kinase GA29083 (755 aa).

Residues 18–52 (QASASGSGTPKKTAASSAAAQNSKQLLDQLSQQQK) are compositionally biased toward low complexity. A disordered region spans residues 18-128 (QASASGSGTP…GSANTNGSAS (111 aa)). Composition is skewed to basic and acidic residues over residues 53–66 (AQEE…RDCD) and 74–84 (EPEKDLDELRD). The span at 87-99 (GSLTGSGSVGKSN) shows a compositional bias: polar residues. The span at 100–128 (GSLSGASSTTSAPAGTSTPGSANTNGSAS) shows a compositional bias: low complexity. Doublecortin domains are found at residues 157 to 243 (HRIK…VDYN) and 314 to 397 (RIVT…VEDF). Positions 484-742 (YTLSQIIGDG…SEDILDHYWT (259 aa)) constitute a Protein kinase domain. ATP-binding positions include 490–498 (IGDGNFAIV) and K513. D605 (proton acceptor) is an active-site residue.

Belongs to the protein kinase superfamily. CAMK Ser/Thr protein kinase family. CaMK subfamily.

The catalysed reaction is L-seryl-[protein] + ATP = O-phospho-L-seryl-[protein] + ADP + H(+). It carries out the reaction L-threonyl-[protein] + ATP = O-phospho-L-threonyl-[protein] + ADP + H(+). In Drosophila pseudoobscura pseudoobscura (Fruit fly), this protein is Serine/threonine-protein kinase GA29083.